The chain runs to 259 residues: Ribosomal RNA small subunit methyltransferase A (259 aa).

The S-adenosyl-L-methionine site is built by Asn-13, Leu-15, Gly-40, Glu-61, Asp-85, and Asn-103.

This sequence belongs to the class I-like SAM-binding methyltransferase superfamily. rRNA adenine N(6)-methyltransferase family. RsmA subfamily.

It localises to the cytoplasm. The catalysed reaction is adenosine(1518)/adenosine(1519) in 16S rRNA + 4 S-adenosyl-L-methionine = N(6)-dimethyladenosine(1518)/N(6)-dimethyladenosine(1519) in 16S rRNA + 4 S-adenosyl-L-homocysteine + 4 H(+). Its function is as follows. Specifically dimethylates two adjacent adenosines (A1518 and A1519) in the loop of a conserved hairpin near the 3'-end of 16S rRNA in the 30S particle. May play a critical role in biogenesis of 30S subunits. This chain is Ribosomal RNA small subunit methyltransferase A, found in Neisseria gonorrhoeae (strain NCCP11945).